Consider the following 398-residue polypeptide: Calreticulin (398 aa).

The N-terminal stretch at 1-19 (MKAVVLVVVSLLALSSINC) is a signal peptide. The segment at 20–197 (DVFFEEKFPD…NEKVESGDLE (178 aa)) is N-domain. Cys105 and Cys137 are joined by a disulfide. 4 residues coordinate an alpha-D-glucoside: Tyr109, Lys111, Tyr128, and Asp135. 7 tandem repeats follow at residues 191–202 (VESGDLEADWDF), 210–221 (DPEAKKPEDWDD), 227–238 (DPEDKKPEDWDK), 244–255 (DPDATKPEDWDD), 259–269 (GEWEPPMIDNP), 273–283 (GVWAPKQIDNP), and 287–297 (GPWVHPEIDNP). A 4 X approximate repeats region spans residues 191–255 (VESGDLEADW…DATKPEDWDD (65 aa)). The interval 198 to 308 (ADWDFLPNKK…YTPDSNLYKR (111 aa)) is P-domain. Residues 207-251 (KIKDPEAKKPEDWDDKPTIPDPEDKKPEDWDKPEHIPDPDATKPE) show a composition bias toward basic and acidic residues. Residues 207–257 (KIKDPEAKKPEDWDDKPTIPDPEDKKPEDWDKPEHIPDPDATKPEDWDDEM) form a disordered region. A 3 X approximate repeats region spans residues 259 to 297 (GEWEPPMIDNPDYKGVWAPKQIDNPAYKGPWVHPEIDNP). The interval 309–398 (DEICAVGLDL…AAPVEEHDEL (90 aa)) is C-domain. Residue Asp317 coordinates an alpha-D-glucoside. The segment at 334–398 (DDPAAAKERG…AAPVEEHDEL (65 aa)) is disordered. Positions 337–372 (AAAKERGEVIKKRQEGEKKMKSEQDEAEREKEKAEK) are enriched in basic and acidic residues. A compositionally biased stretch (acidic residues) spans 373–387 (PDDEEDDEDLDDETG). The short motif at 395-398 (HDEL) is the Prevents secretion from ER element.

The protein belongs to the calreticulin family. In terms of assembly, monomer. Expressed in fat bodies. Not expressed in midgut, silk gland, ovary or testis.

It localises to the endoplasmic reticulum lumen. In terms of biological role, molecular calcium-binding chaperone promoting folding, oligomeric assembly and quality control in the ER via the calreticulin/calnexin cycle. This lectin may interact transiently with almost all of the monoglucosylated glycoproteins that are synthesized in the ER. The polypeptide is Calreticulin (Bombyx mori (Silk moth)).